We begin with the raw amino-acid sequence, 301 residues long: tRNA pseudouridine synthase B (301 aa).

Asp-38 functions as the Nucleophile in the catalytic mechanism.

Belongs to the pseudouridine synthase TruB family. Type 1 subfamily.

It catalyses the reaction uridine(55) in tRNA = pseudouridine(55) in tRNA. In terms of biological role, responsible for synthesis of pseudouridine from uracil-55 in the psi GC loop of transfer RNAs. The chain is tRNA pseudouridine synthase B from Lacticaseibacillus paracasei (strain ATCC 334 / BCRC 17002 / CCUG 31169 / CIP 107868 / KCTC 3260 / NRRL B-441) (Lactobacillus paracasei).